A 231-amino-acid chain; its full sequence is Orotidine 5'-phosphate decarboxylase (231 aa).

Residues D11, K33, 60–69 (DLKFHDIPNT), T120, R181, Q190, G210, and R211 each bind substrate. K62 serves as the catalytic Proton donor.

The protein belongs to the OMP decarboxylase family. Type 1 subfamily. As to quaternary structure, homodimer.

It carries out the reaction orotidine 5'-phosphate + H(+) = UMP + CO2. It functions in the pathway pyrimidine metabolism; UMP biosynthesis via de novo pathway; UMP from orotate: step 2/2. Its function is as follows. Catalyzes the decarboxylation of orotidine 5'-monophosphate (OMP) to uridine 5'-monophosphate (UMP). This is Orotidine 5'-phosphate decarboxylase from Vibrio cholerae serotype O1 (strain ATCC 39315 / El Tor Inaba N16961).